Reading from the N-terminus, the 395-residue chain is Oxalate oxidoreductase subunit alpha (395 aa).

Dimer of heterotrimer of one alpha, one beta and one delta subunit.

The catalysed reaction is oxidized 2[4Fe-4S]-[ferredoxin] + oxalate = reduced 2[4Fe-4S]-[ferredoxin] + 2 CO2. Its function is as follows. Catalyzes the anaerobic oxidation of oxalate using a broad range of electron acceptors, including ferredoxin and the nickel-dependent carbon monoxide dehydrogenase. Does not require coenzyme A as cosubstrate. Enables anaerobic growth on oxalate which is used as energy source by the bacteria. The polypeptide is Oxalate oxidoreductase subunit alpha (Moorella thermoacetica (strain ATCC 39073 / JCM 9320)).